A 678-amino-acid polypeptide reads, in one-letter code: ABC transporter G family member 13 (678 aa).

An ABC transporter domain is found at 10 to 254; sequence VAWEDLTVVI…FGEAGFPCPS (245 aa). 48–55 provides a ligand contact to ATP; it reads GPSGSGKS. In terms of domain architecture, ABC transmembrane type-2 spans 355–567; that stretch reads KQLRILTQRS…ALQGAYKNEM (213 aa). A run of 6 helical transmembrane segments spans residues 374-394, 409-429, 446-466, 490-510, 513-533, and 602-622; these read YYWM…SIFF, CGGF…QSFI, VAVY…LMCL, LDLI…ASVV, FLMG…SAGF, and LDLA…FAIL. S658 carries the phosphoserine modification.

The protein belongs to the ABC transporter superfamily. ABCG family. Eye pigment precursor importer (TC 3.A.1.204) subfamily.

Its subcellular location is the membrane. This chain is ABC transporter G family member 13 (ABCG13), found in Arabidopsis thaliana (Mouse-ear cress).